We begin with the raw amino-acid sequence, 168 residues long: S-ribosylhomocysteine lyase (168 aa).

The Fe cation site is built by His-54, His-58, and Cys-128.

The protein belongs to the LuxS family. As to quaternary structure, homodimer. Fe cation is required as a cofactor.

It carries out the reaction S-(5-deoxy-D-ribos-5-yl)-L-homocysteine = (S)-4,5-dihydroxypentane-2,3-dione + L-homocysteine. Involved in the synthesis of autoinducer 2 (AI-2) which is secreted by bacteria and is used to communicate both the cell density and the metabolic potential of the environment. The regulation of gene expression in response to changes in cell density is called quorum sensing. Catalyzes the transformation of S-ribosylhomocysteine (RHC) to homocysteine (HC) and 4,5-dihydroxy-2,3-pentadione (DPD). This is S-ribosylhomocysteine lyase from Actinobacillus succinogenes (strain ATCC 55618 / DSM 22257 / CCUG 43843 / 130Z).